The chain runs to 641 residues: Mannosyl-oligosaccharide 1,2-alpha-mannosidase IB (641 aa).

Threonine 2 is modified (N-acetylthreonine). Topologically, residues 2–36 (TTPALLPLSGRRIPPLNLGPPSFPHHRATLRLSEK) are cytoplasmic. The chain crosses the membrane as a helical; Signal-anchor for type II membrane protein span at residues 37-57 (FILLLILSAFITLCFGAFFFL). At 58-641 (PDSSKHKRFD…STLSGNPAVR (584 aa)) the chain is on the lumenal side. Cysteines 462 and 494 form a disulfide. Glutamate 508 acts as the Proton donor in catalysis. Threonine 619 is a Ca(2+) binding site. N-linked (GlcNAc...) asparagine glycosylation is present at asparagine 631.

It belongs to the glycosyl hydrolase 47 family. Ca(2+) is required as a cofactor.

It is found in the golgi apparatus membrane. The enzyme catalyses N(4)-(alpha-D-Man-(1-&gt;2)-alpha-D-Man-(1-&gt;2)-alpha-D-Man-(1-&gt;3)-[alpha-D-Man-(1-&gt;2)-alpha-D-Man-(1-&gt;3)-[alpha-D-Man-(1-&gt;2)-alpha-D-Man-(1-&gt;6)]-alpha-D-Man-(1-&gt;6)]-beta-D-Man-(1-&gt;4)-beta-D-GlcNAc-(1-&gt;4)-beta-D-GlcNAc)-L-asparaginyl-[protein] (N-glucan mannose isomer 9A1,2,3B1,2,3) + 4 H2O = N(4)-(alpha-D-Man-(1-&gt;3)-[alpha-D-Man-(1-&gt;3)-[alpha-D-Man-(1-&gt;6)]-alpha-D-Man-(1-&gt;6)]-beta-D-Man-(1-&gt;4)-beta-D-GlcNAc-(1-&gt;4)-beta-D-GlcNAc)-L-asparaginyl-[protein] (N-glucan mannose isomer 5A1,2) + 4 beta-D-mannose. The catalysed reaction is N(4)-(alpha-D-Man-(1-&gt;2)-alpha-D-Man-(1-&gt;2)-alpha-D-Man-(1-&gt;3)-[alpha-D-Man-(1-&gt;3)-[alpha-D-Man-(1-&gt;2)-alpha-D-Man-(1-&gt;6)]-alpha-D-Man-(1-&gt;6)]-beta-D-Man-(1-&gt;4)-beta-D-GlcNAc-(1-&gt;4)-beta-D-GlcNAc)-L-asparaginyl-[protein] (N-glucan mannose isomer 8A1,2,3B1,3) + 3 H2O = N(4)-(alpha-D-Man-(1-&gt;3)-[alpha-D-Man-(1-&gt;3)-[alpha-D-Man-(1-&gt;6)]-alpha-D-Man-(1-&gt;6)]-beta-D-Man-(1-&gt;4)-beta-D-GlcNAc-(1-&gt;4)-beta-D-GlcNAc)-L-asparaginyl-[protein] (N-glucan mannose isomer 5A1,2) + 3 beta-D-mannose. It participates in protein modification; protein glycosylation. Inhibited by both 1-deoxymannojirimycin and kifunensine. Involved in the maturation of Asn-linked oligosaccharides. Progressively trim alpha-1,2-linked mannose residues from Man(9)GlcNAc(2) to produce Man(5)GlcNAc(2). This Mus musculus (Mouse) protein is Mannosyl-oligosaccharide 1,2-alpha-mannosidase IB (Man1a2).